The primary structure comprises 159 residues: 6,7-dimethyl-8-ribityllumazine synthase (159 aa).

5-amino-6-(D-ribitylamino)uracil-binding positions include tryptophan 26, 58–60 (AIE), and 80–82 (VVI). 85 to 86 (ET) contacts (2S)-2-hydroxy-3-oxobutyl phosphate. Histidine 88 serves as the catalytic Proton donor. Position 113 (asparagine 113) interacts with 5-amino-6-(D-ribitylamino)uracil. Arginine 127 lines the (2S)-2-hydroxy-3-oxobutyl phosphate pocket.

This sequence belongs to the DMRL synthase family. In terms of assembly, homopentamer.

The catalysed reaction is (2S)-2-hydroxy-3-oxobutyl phosphate + 5-amino-6-(D-ribitylamino)uracil = 6,7-dimethyl-8-(1-D-ribityl)lumazine + phosphate + 2 H2O + H(+). It participates in cofactor biosynthesis; riboflavin biosynthesis; riboflavin from 2-hydroxy-3-oxobutyl phosphate and 5-amino-6-(D-ribitylamino)uracil: step 1/2. Catalyzes the formation of 6,7-dimethyl-8-ribityllumazine by condensation of 5-amino-6-(D-ribitylamino)uracil with 3,4-dihydroxy-2-butanone 4-phosphate. This is the penultimate step in the biosynthesis of riboflavin. The chain is 6,7-dimethyl-8-ribityllumazine synthase from Mycolicibacterium gilvum (strain PYR-GCK) (Mycobacterium gilvum (strain PYR-GCK)).